Reading from the N-terminus, the 201-residue chain is Holliday junction resolvase RecU (201 aa).

Mg(2+) contacts are provided by Thr-85, Asp-87, Glu-100, and Gln-119.

The protein belongs to the RecU family. It depends on Mg(2+) as a cofactor.

The protein localises to the cytoplasm. The enzyme catalyses Endonucleolytic cleavage at a junction such as a reciprocal single-stranded crossover between two homologous DNA duplexes (Holliday junction).. Its function is as follows. Endonuclease that resolves Holliday junction intermediates in genetic recombination. Cleaves mobile four-strand junctions by introducing symmetrical nicks in paired strands. Promotes annealing of linear ssDNA with homologous dsDNA. Required for DNA repair, homologous recombination and chromosome segregation. The polypeptide is Holliday junction resolvase RecU (Geobacillus sp. (strain WCH70)).